Consider the following 58-residue polypeptide: Succinate dehydrogenase subunit 8A, mitochondrial (58 aa).

Component of complex II composed of eight subunits in plants: four classical SDH subunits SDH1, SDH2, SDH3 and SDH4 (a flavoprotein (FP), an iron-sulfur protein (IP), and a cytochrome b composed of a large and a small subunit.), as well as four subunits unknown in mitochondria from bacteria and heterotrophic eukaryotes.

It is found in the mitochondrion inner membrane. The protein operates within carbohydrate metabolism; tricarboxylic acid cycle. The protein is Succinate dehydrogenase subunit 8A, mitochondrial of Oryza sativa subsp. japonica (Rice).